Here is a 423-residue protein sequence, read N- to C-terminus: MSSKFMKSTAVLGTVTLASLLLVACGSKTADKPADSGSSEVKELTVYVDEGYKSYIEEVAKAYEKEAGVKVTLKTGDALGGLDKLSLDNQSGNVPDVMMAPYDRVGSLGSDGQLSEVKLSDGAKTDDTTKSLVTAANGKVYGAPAVIESLVMYYNKDLVKDAPKTFADLENLAKDSKYAFAGEDGKTTAFLADWTNFYYTYGLLAGNGAYVFGQNGKDAKDIGLANDGSIAGINYAKSWYEKWPKGMQDTEGAGNLIQTQFQEGKTAAIIDGPWKAQAFKDAKVNYGVATIPTLPNGKEYAAFGGGKAWVIPQAVKNLEASQKFVDFLVATEQQKVLYDKTNEIPANTEARSYAEGKNDELTTAVIKQFKNTQPLPNISQMSAVWDPAKNMLFDAVSGQKDAKTAANDAVTLIKETIKQKFGE.

A signal peptide spans 1 to 24 (MSSKFMKSTAVLGTVTLASLLLVA). Cys25 carries the N-palmitoyl cysteine lipid modification. Cys25 carries the S-diacylglycerol cysteine lipid modification. Substrate-binding positions include Tyr52, Asp77, Asp83, 103 to 104 (DR), Glu148, Asp193, Asn196, 251 to 254 (EGAG), Trp274, and Lys307.

It belongs to the bacterial solute-binding protein 1 family.

It is found in the cell membrane. Its function is as follows. Part of an ABC transporter complex involved in the uptake of maltodextrins. Binds glycogen-derived linear maltooligosaccharides increasing in size from maltotriose to maltooctaose with the highest affinity for maltotriose. Has a very weak affinity for maltose. Has also a very low affinity for maltotetraitol, indicating that the binding is selective for maltooligosaccharides with an intact reducing end. The protein is Maltooligosaccharide ABC transporter solute-binding lipoprotein (malX) of Streptococcus pneumoniae (strain ATCC BAA-255 / R6).